We begin with the raw amino-acid sequence, 3526 residues long: WD repeat and FYVE domain-containing protein 3 (3526 aa).

A phosphoserine mark is found at Ser1942 and Ser2278. Residues 2285–2981 (LTGSRRNRKE…PHPPKRVRSR (697 aa)) are sufficient for localization to p62 bodies/ALIS. 2 disordered regions span residues 2403–2429 (ETNV…PARY) and 2459–2522 (SSEG…EKTD). The segment covering 2468–2477 (EPEHGEDTIA) has biased composition (basic and acidic residues). A Phosphoserine modification is found at Ser2492. Residues 2531–2656 (EEGEKIQHMY…IRNKVYQRFL (126 aa)) enclose the BEACH-type PH domain. The interval 2586 to 3526 (MHEPIIPRGA…RGSEDGPRNC (941 aa)) is interaction with SQSTM1. Residues 2683–2976 (GLLSTLVGEK…QLFKKPHPPK (294 aa)) enclose the BEACH domain. Positions 2981–3526 (RLNGDNAGIS…RGSEDGPRNC (546 aa)) are interaction with ATG5. 4 WD repeats span residues 3077–3115 (SEWG…EKAK), 3125–3164 (GHTD…FLTQ), 3167–3206 (GHRA…VSVN), and 3210–3254 (GRSQ…VPET). The disordered stretch occupies residues 3272 to 3335 (AQIGQEAQDE…SGSDDSRRWS (64 aa)). Residues 3278–3290 (AQDEDSSDSEADE) show a composition bias toward acidic residues. The segment at 3313–3363 (AASCRATAAWCTDSGSDDSRRWSDQLSLDEKDGFIFVNYSEGQTRAHLQGP) is interaction with GABARAP. 2 positions are modified to phosphoserine: Ser3335 and Ser3339. The LC3-interacting region (LIR) motif lies at 3346-3349 (FIFV). Residues 3408-3447 (AHPAEVTALGISKDHSRILVGDSRGRVFSWSVSDQPGRSA) form a WD 5 repeat. Residues 3454–3514 (DEGGDSCSGC…VCQNCYYNLQ (61 aa)) form an FYVE-type zinc finger. Residues Cys3460, Cys3463, Cys3476, Cys3479, Cys3484, Cys3487, Cys3506, and Cys3509 each contribute to the Zn(2+) site.

Directly interacts with ATG5 and associates with the ATG12-ATG5-ATG16L complex. Interacts with p62/SQSTM1; this interaction is required to recruit WDFY3 to cytoplasmic bodies and to PML bodies. Directly interacts with GABARAP, GABARAPL1 and GABARAPL2; the interaction with GABARAP is required for WDFY3 recruitment to MAP1LC3B-positive p62/SQSTM1 bodies. Weakly interacts with MAP1LC3C; this interaction is direct. Does not interact with MAP1LC3A, nor MAP1LC3B. Interacts with TRAF6. In terms of tissue distribution, expressed in osteoclast and their mononuclear precursors (at protein level).

It is found in the nucleus membrane. The protein localises to the cytoplasm. Its subcellular location is the cytosol. The protein resides in the nucleus. It localises to the PML body. It is found in the membrane. The protein localises to the perikaryon. Its subcellular location is the cell projection. The protein resides in the axon. In terms of biological role, required for selective macroautophagy (aggrephagy). Acts as an adapter protein by linking specific proteins destined for degradation to the core autophagic machinery members, such as the ATG5-ATG12-ATG16L E3-like ligase, SQSTM1 and LC3. Along with p62/SQSTM1, involved in the formation and autophagic degradation of cytoplasmic ubiquitin-containing inclusions (p62 bodies, ALIS/aggresome-like induced structures). Along with SQSTM1, required to recruit ubiquitinated proteins to PML bodies in the nucleus. Important for normal brain development. Essential for the formation of axonal tracts throughout the brain and spinal cord, including the formation of the major forebrain commissures. Involved in the ability of neural cells to respond to guidance cues. Required for cortical neurons to respond to the trophic effects of netrin-1/NTN1. Regulates Wnt signaling through the removal of DVL3 aggregates, likely in an autophagy-dependent manner. This process may be important for the determination of brain size during embryonic development. May regulate osteoclastogenesis by acting on the TNFSF11/RANKL - TRAF6 pathway. After cytokinetic abscission, involved in midbody remnant degradation. In vitro strongly binds to phosphatidylinositol 3-phosphate (PtdIns3P). The protein is WD repeat and FYVE domain-containing protein 3 (WDFY3) of Homo sapiens (Human).